A 1234-amino-acid chain; its full sequence is PAN2-PAN3 deadenylation complex catalytic subunit PAN2 (1234 aa).

The interval 12 to 32 (LKNSNNNSNSNSSSNNSSNGV) is disordered. Over residues 14–30 (NSNNNSNSNSSSNNSSN) the composition is skewed to low complexity. 3 WD repeats span residues 176–213 (NHTG…SIKT), 272–315 (AFPA…VYHA), and 342–381 (QQQP…TLSK). The segment at 323–346 (PLPPAGSSAAQQQKQQQQQQQQPH) is disordered. Over residues 333-344 (QQQKQQQQQQQQ) the composition is skewed to low complexity. The linker stretch occupies residues 383–537 (FVNFPQEIER…DSIFQCQNDE (155 aa)). Residues 538 to 946 (KIPNCYSRLQ…KPVIVIYQEV (409 aa)) enclose the USP domain. The disordered stretch occupies residues 751 to 775 (PNTQQDQQQQQQQQQQQQQQQQPTN). The segment covering 754–772 (QQDQQQQQQQQQQQQQQQQ) has biased composition (low complexity). Aspartate 1004, glutamate 1006, aspartate 1138, and aspartate 1191 together coordinate a divalent metal cation. An Exonuclease domain is found at 1072–1199 (GEAFIDDYIV…EDARTALLLY (128 aa)).

The protein belongs to the peptidase C19 family. PAN2 subfamily. In terms of assembly, forms a heterotrimer with an asymmetric homodimer of the regulatory subunit PAN3 to form the poly(A)-nuclease (PAN) deadenylation complex. A divalent metal cation is required as a cofactor.

It is found in the cytoplasm. The catalysed reaction is Exonucleolytic cleavage of poly(A) to 5'-AMP.. Its activity is regulated as follows. Positively regulated by the regulatory subunit PAN3. Functionally, catalytic subunit of the poly(A)-nuclease (PAN) deadenylation complex, one of two cytoplasmic mRNA deadenylases involved in mRNA turnover. PAN specifically shortens poly(A) tails of RNA and the activity is stimulated by poly(A)-binding protein PAB1. PAN deadenylation is followed by rapid degradation of the shortened mRNA tails by the CCR4-NOT complex. Deadenylated mRNAs are then degraded by two alternative mechanisms, namely exosome-mediated 3'-5' exonucleolytic degradation, or deadenylation-dependent mRNA decaping and subsequent 5'-3' exonucleolytic degradation by XRN1. May also be involved in post-transcriptional maturation of mRNA poly(A) tails. This is PAN2-PAN3 deadenylation complex catalytic subunit PAN2 from Lodderomyces elongisporus (strain ATCC 11503 / CBS 2605 / JCM 1781 / NBRC 1676 / NRRL YB-4239) (Yeast).